Here is a 457-residue protein sequence, read N- to C-terminus: UDP-N-acetylmuramate--L-alanine ligase (457 aa).

An ATP-binding site is contributed by 109–115 (GTDGKTT).

Belongs to the MurCDEF family.

The protein resides in the cytoplasm. It carries out the reaction UDP-N-acetyl-alpha-D-muramate + L-alanine + ATP = UDP-N-acetyl-alpha-D-muramoyl-L-alanine + ADP + phosphate + H(+). Its pathway is cell wall biogenesis; peptidoglycan biosynthesis. In terms of biological role, cell wall formation. The chain is UDP-N-acetylmuramate--L-alanine ligase from Thermotoga petrophila (strain ATCC BAA-488 / DSM 13995 / JCM 10881 / RKU-1).